Reading from the N-terminus, the 253-residue chain is Hydroxyacylglutathione hydrolase (253 aa).

His59, His61, Asp63, His64, His118, Asp143, and His181 together coordinate Zn(2+).

Belongs to the metallo-beta-lactamase superfamily. Glyoxalase II family. As to quaternary structure, monomer. Zn(2+) serves as cofactor.

The catalysed reaction is an S-(2-hydroxyacyl)glutathione + H2O = a 2-hydroxy carboxylate + glutathione + H(+). Its pathway is secondary metabolite metabolism; methylglyoxal degradation; (R)-lactate from methylglyoxal: step 2/2. Functionally, thiolesterase that catalyzes the hydrolysis of S-D-lactoyl-glutathione to form glutathione and D-lactic acid. The chain is Hydroxyacylglutathione hydrolase from Prochlorococcus marinus (strain MIT 9211).